We begin with the raw amino-acid sequence, 390 residues long: Protein DDI1 homolog (390 aa).

The active site involves D205. A disordered region spans residues 322–344 (MHAPRHQDPATTATTASNPAAPV). A compositionally biased stretch (low complexity) spans 330–343 (PATTATTASNPAAP).

The protein belongs to the DDI1 family.

The protein localises to the cytoplasm. Its activity is regulated as follows. Inhibited by pepstatin, diazoacetyl-DL-norleucine methyl ester (DAN) and nelfinavir. Inhibited by the proteinase inhibitors lopinavir and ritonavir. In terms of biological role, aspartic protease. In Leishmania major, this protein is Protein DDI1 homolog.